Reading from the N-terminus, the 613-residue chain is Pentatricopeptide repeat-containing protein At2g02750 (613 aa).

PPR repeat units lie at residues 30–64 (NKFTFPPLLKSCAKLGDVVQGRILHAQVVKTGFFV), 65–99 (DVFTATALVSMYMKVKQVTDALKVLDEMPERGIAS), 101–126 (NAAVSGLLENGFCRDAFRMFGDARVS), 128–162 (SGMNSVTVASVLGGCGDIEGGMQLHCLAMKSGFEM), 163–193 (EVYVGTSLVSMYSRCGEWVLAARMFEKVPHK), 194–228 (SVVTYNAFISGLMENGVMNLVPSVFNLMRKFSSEE), 230–264 (NDVTFVNAITACASLLNLQYGRQLHGLVMKKEFQF), 265–295 (ETMVGTALIDMYSKCRCWKSAYIVFTELKDT), 297–331 (NLISWNSVISGMMINGQHETAVELFEKLDSEGLKP), 332–366 (DSATWNSLISGFSQLGKVIEAFKFFERMLSVVMVP), 367–401 (SLKCLTSLLSACSDIWTLKNGKEIHGHVIKAAAER), 402–432 (DIFVLTSLIDMYMKCGLSSWARRIFDRFEPK), 435–469 (DPVFWNVMISGYGKHGECESAIEIFELLREEKVEP), 470–500 (SLATFTAVLSACSHCGNVEKGSQIFRLMQEE), and 506–539 (STEHIGCMIDLLGRSGRLREAKEVIDQMSEPSSS). A type E motif; degenerate region spans residues 540 to 613 (VYSSLLGSCR…VKLPGLSLSG (74 aa)).

This sequence belongs to the PPR family. PCMP-E subfamily.

This Arabidopsis thaliana (Mouse-ear cress) protein is Pentatricopeptide repeat-containing protein At2g02750 (PCMP-E22).